Here is a 679-residue protein sequence, read N- to C-terminus: Acetyl-coenzyme A synthetase 2 (679 aa).

A disordered region spans residues 1–32 (MTSSPTHQVVHEANNIKKQETPKEFFERQPRQ). Residues 14–30 (NNIKKQETPKEFFERQP) show a composition bias toward basic and acidic residues. Residues 207–210 (RGGK) and Thr-326 contribute to the CoA site. Residues 402 to 404 (GEP), 426 to 431 (DTYWQT), Asp-517, and Arg-532 each bind ATP. CoA is bound at residue Ser-540. Arg-543 provides a ligand contact to ATP. Arg-611 lines the CoA pocket.

Belongs to the ATP-dependent AMP-binding enzyme family.

The enzyme catalyses acetate + ATP + CoA = acetyl-CoA + AMP + diphosphate. The polypeptide is Acetyl-coenzyme A synthetase 2 (ACS2) (Debaryomyces hansenii (strain ATCC 36239 / CBS 767 / BCRC 21394 / JCM 1990 / NBRC 0083 / IGC 2968) (Yeast)).